The following is a 264-amino-acid chain: Endonuclease V (264 aa).

Positions 72 and 137 each coordinate Mg(2+).

This sequence belongs to the endonuclease V family. Mg(2+) serves as cofactor.

It localises to the cytoplasm. It catalyses the reaction Endonucleolytic cleavage at apurinic or apyrimidinic sites to products with a 5'-phosphate.. Its function is as follows. DNA repair enzyme involved in the repair of deaminated bases. Selectively cleaves double-stranded DNA at the second phosphodiester bond 3' to a deoxyinosine leaving behind the intact lesion on the nicked DNA. The protein is Endonuclease V of Halobacterium salinarum (strain ATCC 700922 / JCM 11081 / NRC-1) (Halobacterium halobium).